The chain runs to 172 residues: Melanocortin-2 receptor accessory protein (172 aa).

The chain crosses the membrane as a helical span at residues 38-58; that stretch reads IVIAFWVSLAAFVVLLFLILL. 2 disordered regions span residues 105-136 and 151-172; these read QAQA…LGGF and GPLV…QLQS.

Belongs to the MRAP family. Homodimer and heterodimer. Forms antiparallel homodimers and heterodimers with MRAP2. Interacts with MC1R, MC2R, MC3R, MC4R and MC5R. In terms of tissue distribution, expressed in adrenal cortex, testis, breast, thyroid, lymph node, ovary and fat. Expressed in adipose tissues.

The protein resides in the cell membrane. Its subcellular location is the endoplasmic reticulum membrane. Functionally, modulator of melanocortin receptors (MC1R, MC2R, MC3R, MC4R and MC5R). Acts by increasing ligand-sensitivity of melanocortin receptors and enhancing generation of cAMP by the receptors. Required both for MC2R trafficking to the cell surface of adrenal cells and for signaling in response to corticotropin (ACTH). May be involved in the intracellular trafficking pathways in adipocyte cells. The sequence is that of Melanocortin-2 receptor accessory protein (MRAP) from Homo sapiens (Human).